Here is a 480-residue protein sequence, read N- to C-terminus: Zinc finger protein ztf-6 (480 aa).

Disordered regions lie at residues 92 to 160, 174 to 198, 282 to 307, and 328 to 351; these read CHDS…TMMV, GTNG…EEHD, LDAG…PTAS, and DANT…MKVP. Composition is skewed to low complexity over residues 95-105, 131-145, 174-187, and 286-296; these read SATSTTTTVSH, SSIE…SSSV, GTNG…TSSS, and SSENDGSTSSS. C2H2-type zinc fingers lie at residues 359-383 and 388-410; these read YICP…FVTH and FNCD…QKIH. Residues 416–441 form a C2H2-type 3; degenerate zinc finger; that stretch reads YQCRGCGTNYTTQNGLRLHRQRNPAC. The segment at 461–480 is disordered; it reads ALSGPLSKNSSPTKQMVSAP.

In terms of biological role, probable transcription factor, involved in regulation of dopamine neuron lineage specification. May play a role in maintaining robustness of the Wnt/beta-catenin asymmetry pathway. This chain is Zinc finger protein ztf-6, found in Caenorhabditis elegans.